Consider the following 188-residue polypeptide: Pyridoxal 5'-phosphate synthase subunit PdxT (188 aa).

An L-glutamine-binding site is contributed by 46-48 (GES). Cysteine 78 functions as the Nucleophile in the catalytic mechanism. L-glutamine is bound by residues arginine 105 and 134–135 (IR). Residues histidine 170 and glutamate 172 each act as charge relay system in the active site.

The protein belongs to the glutaminase PdxT/SNO family. As to quaternary structure, in the presence of PdxS, forms a dodecamer of heterodimers. Only shows activity in the heterodimer.

The enzyme catalyses aldehydo-D-ribose 5-phosphate + D-glyceraldehyde 3-phosphate + L-glutamine = pyridoxal 5'-phosphate + L-glutamate + phosphate + 3 H2O + H(+). It catalyses the reaction L-glutamine + H2O = L-glutamate + NH4(+). The protein operates within cofactor biosynthesis; pyridoxal 5'-phosphate biosynthesis. In terms of biological role, catalyzes the hydrolysis of glutamine to glutamate and ammonia as part of the biosynthesis of pyridoxal 5'-phosphate. The resulting ammonia molecule is channeled to the active site of PdxS. The sequence is that of Pyridoxal 5'-phosphate synthase subunit PdxT from Thermotoga sp. (strain RQ2).